The sequence spans 70 residues: Large ribosomal subunit protein bL31 (70 aa).

This sequence belongs to the bacterial ribosomal protein bL31 family. Type A subfamily. In terms of assembly, part of the 50S ribosomal subunit.

Binds the 23S rRNA. This is Large ribosomal subunit protein bL31 from Mycoplasma mobile (strain ATCC 43663 / 163K / NCTC 11711) (Mesomycoplasma mobile).